Consider the following 513-residue polypeptide: ATP synthase subunit alpha (513 aa).

169-176 (GDRQTGKT) is an ATP binding site.

It belongs to the ATPase alpha/beta chains family. In terms of assembly, F-type ATPases have 2 components, CF(1) - the catalytic core - and CF(0) - the membrane proton channel. CF(1) has five subunits: alpha(3), beta(3), gamma(1), delta(1), epsilon(1). CF(0) has three main subunits: a(1), b(2) and c(9-12). The alpha and beta chains form an alternating ring which encloses part of the gamma chain. CF(1) is attached to CF(0) by a central stalk formed by the gamma and epsilon chains, while a peripheral stalk is formed by the delta and b chains.

It localises to the cell inner membrane. The enzyme catalyses ATP + H2O + 4 H(+)(in) = ADP + phosphate + 5 H(+)(out). In terms of biological role, produces ATP from ADP in the presence of a proton gradient across the membrane. The alpha chain is a regulatory subunit. The chain is ATP synthase subunit alpha from Shewanella sp. (strain MR-4).